The primary structure comprises 62 residues: Sperm protamine P1 (62 aa).

Residues 1–62 (MARYRHSRSR…RYSRRRRRRY (62 aa)) are disordered.

Belongs to the protamine P1 family. Testis.

Its subcellular location is the nucleus. The protein resides in the chromosome. Protamines substitute for histones in the chromatin of sperm during the haploid phase of spermatogenesis. They compact sperm DNA into a highly condensed, stable and inactive complex. This is Sperm protamine P1 (PRM1) from Thylogale stigmatica (Red-legged pademelon).